The chain runs to 492 residues: Trk system potassium uptake protein TrkI (492 aa).

10 helical membrane-spanning segments follow: residues 20–40 (VLAV…LVLI), 47–67 (ALAF…SWIV), 81–101 (FVLT…PLVL), 143–163 (IMQW…LPFL), 196–216 (IYCG…MSPL), 246–266 (QLLW…VLYI), 282–302 (VQGL…WRVS), 334–354 (AWGA…GCSG), 403–423 (VVAF…GLSL), and 465–485 (WLLC…LVLL).

It belongs to the TrkH potassium transport family.

It localises to the cell inner membrane. Functionally, medium-affinity potassium transport system. Probably interacts with Trk system potassium uptake protein TrkA. Main K(+) transporter in osmotically adapted cells. This chain is Trk system potassium uptake protein TrkI (trkI), found in Halomonas elongata (strain ATCC 33173 / DSM 2581 / NBRC 15536 / NCIMB 2198 / 1H9).